The following is a 395-amino-acid chain: Beta-1,4-galactosyltransferase 3 (395 aa).

Over 1-10 (MLRRLLERPC) the chain is Cytoplasmic. The chain crosses the membrane as a helical; Signal-anchor for type II membrane protein span at residues 11 to 31 (TLALLVGSQLAVMMYLSLGGF). At 32–395 (RSLSALFGRD…ANHTAPHGSH (364 aa)) the chain is on the lumenal side. A glycan (N-linked (GlcNAc...) asparagine) is linked at Asn57. Cys79 and Cys121 are oxidised to a cystine. Residues 132-136 (PHRAR), 171-173 (FNR), 198-199 (VD), Tyr228, and Trp260 each bind UDP-alpha-D-galactose. Cys192 and Cys211 are disulfide-bonded. Residue Asp199 coordinates Mn(2+). Residue 262–265 (GEDD) participates in N-acetyl-D-glucosamine binding. A Mn(2+)-binding site is contributed by His293. UDP-alpha-D-galactose is bound at residue 293–295 (HRG). Position 305 (Arg305) interacts with N-acetyl-D-glucosamine. Residues Asn339 and Asn387 are each glycosylated (N-linked (GlcNAc...) asparagine). Residues 341-395 (TADIGTDPRGPRAPSGPRYPPGSSQAFRQEMLQRRPPARPGPLPTANHTAPHGSH) form a disordered region.

It belongs to the glycosyltransferase 7 family. It depends on Mn(2+) as a cofactor.

The protein localises to the golgi apparatus. Its subcellular location is the golgi stack membrane. It catalyses the reaction an N-acetyl-beta-D-glucosaminyl derivative + UDP-alpha-D-galactose = a beta-D-galactosyl-(1-&gt;4)-N-acetyl-beta-D-glucosaminyl derivative + UDP + H(+). It carries out the reaction N-acetyl-D-glucosamine + UDP-alpha-D-galactose = beta-D-galactosyl-(1-&gt;4)-N-acetyl-D-glucosamine + UDP + H(+). The catalysed reaction is a beta-D-GlcNAc-(1-&gt;3)-beta-D-Gal-(1-&gt;4)-beta-D-Glc-(1&lt;-&gt;1)-Cer(d18:1(4E)) + UDP-alpha-D-galactose = a neolactoside nLc4Cer(d18:1(4E)) + UDP + H(+). The enzyme catalyses a beta-D-glucosylceramide + UDP-alpha-D-galactose = a beta-D-galactosyl-(1-&gt;4)-beta-D-glucosyl-(1&lt;-&gt;1)-ceramide + UDP + H(+). It catalyses the reaction a neolactoside IV(3)-beta-GlcNAc-nLc4Cer + UDP-alpha-D-galactose = a neolactoside nLc6Cer + UDP + H(+). It participates in protein modification; protein glycosylation. Functionally, responsible for the synthesis of complex-type N-linked oligosaccharides in many glycoproteins as well as the carbohydrate moieties of glycolipids. The sequence is that of Beta-1,4-galactosyltransferase 3 (B4GALT3) from Cricetulus griseus (Chinese hamster).